Reading from the N-terminus, the 294-residue chain is 33 kDa chaperonin (294 aa).

2 disulfides stabilise this stretch: C237–C239 and C270–C273.

Belongs to the HSP33 family. Under oxidizing conditions two disulfide bonds are formed involving the reactive cysteines. Under reducing conditions zinc is bound to the reactive cysteines and the protein is inactive.

The protein localises to the cytoplasm. Its function is as follows. Redox regulated molecular chaperone. Protects both thermally unfolding and oxidatively damaged proteins from irreversible aggregation. Plays an important role in the bacterial defense system toward oxidative stress. The polypeptide is 33 kDa chaperonin (Geobacillus kaustophilus (strain HTA426)).